A 349-amino-acid polypeptide reads, in one-letter code: GDSL esterase/lipase At2g19060 (349 aa).

An N-terminal signal peptide occupies residues 1 to 25; sequence MADKMFKALLWAFATAVVMAEAVRG. The Nucleophile role is filled by serine 37. Asparagine 178 carries N-linked (GlcNAc...) asparagine glycosylation. Catalysis depends on residues aspartate 317 and histidine 320.

It belongs to the 'GDSL' lipolytic enzyme family.

The protein resides in the secreted. This chain is GDSL esterase/lipase At2g19060, found in Arabidopsis thaliana (Mouse-ear cress).